The sequence spans 964 residues: Glycine dehydrogenase (decarboxylating) (964 aa).

The residue at position 711 (Lys-711) is an N6-(pyridoxal phosphate)lysine.

The protein belongs to the GcvP family. As to quaternary structure, the glycine cleavage system is composed of four proteins: P, T, L and H. The cofactor is pyridoxal 5'-phosphate.

The enzyme catalyses N(6)-[(R)-lipoyl]-L-lysyl-[glycine-cleavage complex H protein] + glycine + H(+) = N(6)-[(R)-S(8)-aminomethyldihydrolipoyl]-L-lysyl-[glycine-cleavage complex H protein] + CO2. Its function is as follows. The glycine cleavage system catalyzes the degradation of glycine. The P protein binds the alpha-amino group of glycine through its pyridoxal phosphate cofactor; CO(2) is released and the remaining methylamine moiety is then transferred to the lipoamide cofactor of the H protein. The chain is Glycine dehydrogenase (decarboxylating) from Prochlorococcus marinus (strain SARG / CCMP1375 / SS120).